We begin with the raw amino-acid sequence, 434 residues long: Na(+)/H(+) antiporter NhaA 1 (434 aa).

A run of 10 helical transmembrane segments spans residues 30–50, 70–90, 108–128, 141–161, 172–192, 195–215, 286–306, 318–338, 354–374, and 386–406; these read TGGL…NVAG, LSIE…VTGL, ALPI…FVLV, VGWA…LAVV, FLLT…AIFY, QVHW…TVAV, FAVP…VSGF, VIAG…WLLA, VLGM…IGSL, and VTLG…VVLS.

The protein belongs to the NhaA Na(+)/H(+) (TC 2.A.33) antiporter family.

The protein localises to the cell membrane. It carries out the reaction Na(+)(in) + 2 H(+)(out) = Na(+)(out) + 2 H(+)(in). Its function is as follows. Na(+)/H(+) antiporter that extrudes sodium in exchange for external protons. The sequence is that of Na(+)/H(+) antiporter NhaA 1 from Kineococcus radiotolerans (strain ATCC BAA-149 / DSM 14245 / SRS30216).